The primary structure comprises 296 residues: Sulfotransferase 1C2 (296 aa).

A 3'-phosphoadenylyl sulfate-binding site is contributed by 49–54 (KSGTTW). Position 107–109 (107–109 (RTH)) interacts with substrate. Histidine 109 functions as the Proton acceptor in the catalytic mechanism. 3'-phosphoadenylyl sulfate contacts are provided by residues arginine 131, serine 139, tyrosine 194, and 228–233 (TSFEKM). Serine 139 carries the post-translational modification Phosphoserine. Serine 254 carries the post-translational modification Phosphoserine. 3'-phosphoadenylyl sulfate is bound at residue 256-260 (FMRKG).

This sequence belongs to the sulfotransferase 1 family. As to expression, found in gastrointestinal tract tissues, liver and kidney.

The protein localises to the cytoplasm. It is found in the lysosome. It localises to the mitochondrion. It carries out the reaction a phenol + 3'-phosphoadenylyl sulfate = an aryl sulfate + adenosine 3',5'-bisphosphate + H(+). The enzyme catalyses cholesterol + 3'-phosphoadenylyl sulfate = cholesterol sulfate + adenosine 3',5'-bisphosphate + H(+). Sulfotransferase that utilizes 3'-phospho-5'-adenylyl sulfate (PAPS) to catalyze the sulfate conjugation of phenolic compounds. Does not transfer sulfate to steroids, dopamine, acetaminophen, or alpha-naphthol. Except in mitochondria, where it can add sulfate to cholesterol producing cholesterol sulfate, which alters mitochondrial membrane organization, and impacts protein complex mobility increasing state-III respiration, thereby modulating mitochondrial respiration. Catalyzes the sulfation of the carcinogenic N-hydroxy-2-acetylaminofluorene leading to highly reactive intermediates capable of forming DNA adducts, potentially resulting in mutagenesis. The protein is Sulfotransferase 1C2 (SULT1C2) of Oryctolagus cuniculus (Rabbit).